The primary structure comprises 180 residues: Telokin-like protein 20 (180 aa).

Residues 112–180 form a disordered region; that stretch reads SKTDAAVHTS…KQKLDNAKQD (69 aa). Over residues 156-165 the composition is skewed to acidic residues; it reads DFEENIDDGD.

The chain is Telokin-like protein 20 (TLP20) from Lepidoptera (butterflies and moths).